A 229-amino-acid chain; its full sequence is Ribonuclease HII (229 aa).

The 190-residue stretch at Trp34 to Met223 folds into the RNase H type-2 domain. Positions 40, 41, and 131 each coordinate a divalent metal cation.

This sequence belongs to the RNase HII family. Mn(2+) is required as a cofactor. Requires Mg(2+) as cofactor.

It localises to the cytoplasm. It carries out the reaction Endonucleolytic cleavage to 5'-phosphomonoester.. Its function is as follows. Endonuclease that specifically degrades the RNA of RNA-DNA hybrids. The polypeptide is Ribonuclease HII (Rhizobium leguminosarum bv. trifolii (strain WSM2304)).